The following is a 293-amino-acid chain: Protein YIF1A (293 aa).

The disordered stretch occupies residues 1–33 (MAYHSGYGAHGSKHRARAAPDPPPLFDDTSGGY). A2 bears the N-acetylalanine mark. Residues 2-138 (AYHSGYGAHG…PPRQDLNAPD (137 aa)) lie on the Cytoplasmic side of the membrane. S12 carries the post-translational modification Phosphoserine. The chain crosses the membrane as a helical span at residues 139–159 (LYIPTMAFITYVLLAGMALGI). Topologically, residues 160–174 (QKRFSPEVLGLCAST) are lumenal. A helical transmembrane segment spans residues 175 to 195 (ALVWVVMEVLALLLGLYLATV). The Cytoplasmic segment spans residues 196–203 (RSDLSTFH). A helical membrane pass occupies residues 204-226 (LLAYSGYKYVGMILSVLTGLLFG). Topologically, residues 227-229 (SDG) are lumenal. Residues 230-249 (YYVALAWTSSALMYFIVRSL) traverse the membrane as a helical segment. Residues 250–271 (RTAALGPDSMGGPVPRQRLQLY) lie on the Cytoplasmic side of the membrane. Residues 272 to 292 (LTLGAAAFQPLIIYWLTFHLV) traverse the membrane as a helical segment.

It belongs to the YIF1 family. In terms of assembly, interacts with YIPF5.

The protein resides in the endoplasmic reticulum membrane. Its subcellular location is the golgi apparatus membrane. It is found in the endoplasmic reticulum-Golgi intermediate compartment membrane. Its function is as follows. Possible role in transport between endoplasmic reticulum and Golgi. The polypeptide is Protein YIF1A (YIF1A) (Homo sapiens (Human)).